The sequence spans 192 residues: Ion-translocating oxidoreductase complex subunit A (192 aa).

6 helical membrane passes run Ile-5–Leu-25, Val-39–Val-59, Ile-63–Val-83, Leu-102–Leu-122, Val-134–Leu-154, and Ala-171–Val-191.

It belongs to the NqrDE/RnfAE family. In terms of assembly, the complex is composed of six subunits: RnfA, RnfB, RnfC, RnfD, RnfE and RnfG.

The protein localises to the cell inner membrane. Functionally, part of a membrane-bound complex that couples electron transfer with translocation of ions across the membrane. This Haemophilus influenzae (strain 86-028NP) protein is Ion-translocating oxidoreductase complex subunit A.